The following is a 516-amino-acid chain: GMP synthase [glutamine-hydrolyzing] (516 aa).

The 193-residue stretch at 6–198 folds into the Glutamine amidotransferase type-1 domain; it reads KVIIVDYGSQ…LFKIAGIKAD (193 aa). Cys83 serves as the catalytic Nucleophile. Active-site residues include His172 and Glu174. Residues 199–391 enclose the GMPS ATP-PPase domain; the sequence is WSMSSFCERV…LGLPDFIVWR (193 aa). Residue 227-233 participates in ATP binding; the sequence is SGGIDST.

Homodimer.

It catalyses the reaction XMP + L-glutamine + ATP + H2O = GMP + L-glutamate + AMP + diphosphate + 2 H(+). It functions in the pathway purine metabolism; GMP biosynthesis; GMP from XMP (L-Gln route): step 1/1. Its function is as follows. Catalyzes the synthesis of GMP from XMP. The chain is GMP synthase [glutamine-hydrolyzing] from Oleidesulfovibrio alaskensis (strain ATCC BAA-1058 / DSM 17464 / G20) (Desulfovibrio alaskensis).